A 203-amino-acid chain; its full sequence is MPNKPGLWSRLVDYLGFGPEEDEFEDGELEQVQPAYQEEPPRRSAPERRGQVVPISAVPSKQGTVKVVVVEPRSFEEVQTIVDQMKARRPVILNLESLDKDLAQKILNFLNGAIYALNGETQRVSAGIFFYAPPGIDVSTMGRGLTGTAIGGGAVDLPPGVLEKLMGTASGSQEGDLLARTARRSEEGDRTGADRSKFDWRNQ.

2 disordered regions span residues 26–51 (DGEL…RRGQ) and 167–203 (GTAS…WRNQ). 2 stretches are compositionally biased toward basic and acidic residues: residues 39–50 (EPPRRSAPERRG) and 183–203 (RRSE…WRNQ).

It belongs to the SepF family. As to quaternary structure, homodimer. Interacts with FtsZ.

It localises to the cytoplasm. Its function is as follows. Cell division protein that is part of the divisome complex and is recruited early to the Z-ring. Probably stimulates Z-ring formation, perhaps through the cross-linking of FtsZ protofilaments. Its function overlaps with FtsA. The protein is Cell division protein SepF of Symbiobacterium thermophilum (strain DSM 24528 / JCM 14929 / IAM 14863 / T).